The primary structure comprises 564 residues: METKVIAINRRSANITEGKSRAPNRSMYYAMGYEESDFKKPMIGVANGHSTITPCNSGLQKLADAAIDAIEEAGGNAQVFGTPTISDGMAMGTEGMKYSLVSREVISDCIETCVQGQWMDGVLVVGGCDKNMPGGLMGMLRANVPAIFVYGGTILPGHYQGKDLNIVSVFEAVGENAAGRMSDEDLLQIERRAIPGTGSCGGMYTANTMSSAFEALGISLPYSSTMANPHDEKLNSAKESARVLIEAVKKDIKPRDIVTKKSIENAVAVIMATGGSTNAVLHFLAIAHAAGVEWTIDDFERVRQKTPVLCNLKPSGQYLAVDLHQAGGIPQVMKMLLVAGLLHGDCITISGQTIAEVLADVPDAPRAGQDVIRPIDQPMYAQGHLAILKGNLSPEGCVAKITGLKNPVMTGPARVFEDEQSGLKAILDGKIVAGDVMVLRYLGPKGGPGMPEMLAPTGALIGAGLGESVGLITDGRFSGGTWGMVVGHVAPEAAAGGNIAFIEEGDSITIDANQLLLQLNISDAELESRKVGWTAPAPRYTRGVQAKFAFNASSASKGAVLDDY.

Cys55 is a binding site for [2Fe-2S] cluster. Mg(2+) is bound at residue Asp87. [2Fe-2S] cluster is bound at residue Cys128. Residues Asp129 and Lys130 each contribute to the Mg(2+) site. Lys130 carries the post-translational modification N6-carboxylysine. Cys200 contributes to the [2Fe-2S] cluster binding site. Residue Glu452 coordinates Mg(2+). The active-site Proton acceptor is the Ser478.

It belongs to the IlvD/Edd family. In terms of assembly, homodimer. Requires [2Fe-2S] cluster as cofactor. Mg(2+) serves as cofactor.

It catalyses the reaction (2R)-2,3-dihydroxy-3-methylbutanoate = 3-methyl-2-oxobutanoate + H2O. It carries out the reaction (2R,3R)-2,3-dihydroxy-3-methylpentanoate = (S)-3-methyl-2-oxopentanoate + H2O. It participates in amino-acid biosynthesis; L-isoleucine biosynthesis; L-isoleucine from 2-oxobutanoate: step 3/4. The protein operates within amino-acid biosynthesis; L-valine biosynthesis; L-valine from pyruvate: step 3/4. Its function is as follows. Functions in the biosynthesis of branched-chain amino acids. Catalyzes the dehydration of (2R,3R)-2,3-dihydroxy-3-methylpentanoate (2,3-dihydroxy-3-methylvalerate) into 2-oxo-3-methylpentanoate (2-oxo-3-methylvalerate) and of (2R)-2,3-dihydroxy-3-methylbutanoate (2,3-dihydroxyisovalerate) into 2-oxo-3-methylbutanoate (2-oxoisovalerate), the penultimate precursor to L-isoleucine and L-valine, respectively. This is Dihydroxy-acid dehydratase from Polaromonas naphthalenivorans (strain CJ2).